Reading from the N-terminus, the 260-residue chain is Cytochrome c1-2, heme protein, mitochondrial (260 aa).

A mitochondrion-targeting transit peptide spans 1-17 (IGAGVSGLLGFATVASA). At 18-221 (DEAEHGLECP…AAEPEMEERK (204 aa)) the chain is on the mitochondrial intermembrane side. Positions 43-150 (ASIRRGHQVY…NGQNYVFALL (108 aa)) constitute a Cytochrome c domain. Cys56, Cys59, His60, and Met179 together coordinate heme c. A helical membrane pass occupies residues 222–241 (LMGFKWIFVLSLALLQAAYY). At 242 to 260 (RRLRWSVLKSRKLVLDVVN) the chain is on the mitochondrial matrix side.

Belongs to the cytochrome c family. Component of the ubiquinol-cytochrome c oxidoreductase (cytochrome b-c1 complex, complex III, CIII), a multisubunit enzyme composed of 3 respiratory subunits cytochrome b, cytochrome c1 and Rieske protein, 2 core protein subunits, and additional low-molecular weight protein subunits. The complex exists as an obligatory dimer and forms supercomplexes (SCs) in the inner mitochondrial membrane with cytochrome c oxidase (complex IV, CIV). It depends on heme c as a cofactor. In all tissues analyzed.

Its subcellular location is the mitochondrion inner membrane. The catalysed reaction is a quinol + 2 Fe(III)-[cytochrome c](out) = a quinone + 2 Fe(II)-[cytochrome c](out) + 2 H(+)(out). Functionally, component of the ubiquinol-cytochrome c oxidoreductase, a multisubunit transmembrane complex that is part of the mitochondrial electron transport chain which drives oxidative phosphorylation. The respiratory chain contains 3 multisubunit complexes succinate dehydrogenase (complex II, CII), ubiquinol-cytochrome c oxidoreductase (cytochrome b-c1 complex, complex III, CIII) and cytochrome c oxidase (complex IV, CIV), that cooperate to transfer electrons derived from NADH and succinate to molecular oxygen, creating an electrochemical gradient over the inner membrane that drives transmembrane transport and the ATP synthase. The cytochrome b-c1 complex catalyzes electron transfer from ubiquinol to cytochrome c, linking this redox reaction to translocation of protons across the mitochondrial inner membrane, with protons being carried across the membrane as hydrogens on the quinol. In the process called Q cycle, 2 protons are consumed from the matrix, 4 protons are released into the intermembrane space and 2 electrons are passed to cytochrome c. Cytochrome c1 is a catalytic core subunit containing a c-type heme. It transfers electrons from the [2Fe-2S] iron-sulfur cluster of the Rieske protein to cytochrome c. This is Cytochrome c1-2, heme protein, mitochondrial (CYCL) from Solanum tuberosum (Potato).